Consider the following 1009-residue polypeptide: MWHFCEQVYECFEGYHRDYSVQTVPVEYLASHYIVNKFRPDPLAVLWLFCLGIWWEIIQILHHLFQYKEPALFVGSCQNLAAFLEKKYSMEVIQKEGLAASALKDKERLTEKAVVNQPLSNLIPHSNKMYERSKSLLSGLKRGLIKQKEIAFDKLMGGSTIDFQHIPTGTLTPGENKVLDIPIVPQHLLTSTNITDYHQANKKNANGATALHVGAIEVIMDCFTSPDSNICGGMLLVDTAHLNPDNAIRSVFVAPFIGGRPIRVLLFPDTLVEIAPNMNSRFKLLCTTSNGDVAPDFNLAMVKVNVAGCAVSLTRTYTPTAYLEQELIKEKGAIVQYLNRHTFSMHRNNQMTKEEMQKQRLSFRLESALTLQEKHPLHATFCKSTNFVYKIGGDAKEGSNGNLTVNESQLSSHSPSAHVLHKHNNSGDNEVEFSEIGVVVPGAGRTKAYGQNELDLAQLSLDDTSSLRGTALQTKLATSRIILSKTMVGNTVLREDLLATFLQDSNERAAIDLIRTHVIRGKIRCVASINVPENTGCALAICFNSGITGAADTDIYTTSSQDAIVWNPACEKAVELTFNPNPCGDAWNFVFLQQTKAHFAVQCVTGWTTTPLTDLALVLTWHIDRSLCVPKTLTISSAHASFPINRWMGKLSFPQGPARVLKRMPLAIGGGAGTKDAILMNMPNAVISLHRYFRGDFVFEITKMSSPYIKATIAFFIAFGDITEEMTNLESFPHKLVQFAEIQGRTTITFTQSEFLTAWSTQVLSTVNPQKDGCPHLYALLHDSATSTIEGNFVIGVKLLDIRNYRAYGHNPGFEGARLLGISGQSTMVQQLGTYNPIWMVRTPLESTAQQNFASFTADLMESTISGDSTGNWNITVYPSPIANLLKVAAWKKGTIRFQLICRGAAVKQSDWAASARIDLINNLSNKALPARSWYITKPRGGDIEFDLEIAGPNNGFEMANSSWAFQTTWYLEIAIDNPKQFTLFELNACLMEDFEVAGNTLNPPILLS.

Positions 387–393 (FVYKIGG) are involved in tubule formation by the movement protein.

Interacts with the large capsid protein. In terms of assembly, interacts with the small capsid protein. Homomultimer; assembles as pentons. Interacts with the movement protein (via C-terminus). As to quaternary structure, interacts (via C-terminus) with the large capsid protein. Specific enzymatic cleavages by picornain 3C-like protease in vivo yield mature proteins.

Its subcellular location is the host cell junction. The protein localises to the host plasmodesma. It is found in the virion. Its function is as follows. Responsible for viral RNA2 accumulation. May function by recruiting the RNA1-encoded polyprotein that contains the replication protein to RNA2 and enable its replication. In terms of biological role, transports the viral genome to neighboring plant cells directly through plasmosdesmata, without any budding. The movement protein allows efficient cell to cell propagation, by bypassing the host cell wall barrier. Acts by forming a tubular structure at the host plasmodesmata, enlarging it enough to allow free passage of virion capsids. Binds to GTP and to single-stranded RNA and single-stranded DNA in a non-sequence-specific manner. Functionally, together with the small capsid protein, forms an icosahedral capsid (T=3) enclosing the viral positive strand RNA genome, with a diameter of approximately 300 Angstroms. The capsid is formed from 60 copies each of the large and the small capsid protein. The large capsid protein interacts with the viral RNA. Together with the large capsid protein, forms an icosahedral capsid (T=3) enclosing the viral positive strand RNA genome, with a diameter of approximately 300 Angstroms. The capsid is formed from 60 copies each of the large and the small capsid protein. The small capsid protein forms the turrets at the fivefold axes of the viral particle. The protein is RNA2 polyprotein of Squash mosaic virus (strain melon) (SqMV).